A 368-amino-acid polypeptide reads, in one-letter code: MLVPPDMLVAQTRMIYQMNRYCAERVQARMFKTSTAIREICKIVQDILKEVELQEPRFISSLVECNGRFEGVEVISPNEFEIVLYLNQMGVFNFVDDGTLPGCAVLKLSDGRKRSMSLWVEFITASGYLSSRKIRSRFQTLVAQACDKSMYRDMVKIIGDTTEVKLRIRERYVVQITPAFKCSGIWPRSAAHWPMPHIPWPHPNIVAEVKTEGFDLLSKDSAAMQNKNNNAASMEGDAWVLSFYEAENRLLQGGCRRRCLSMLKTLRDRHLELPGSPISAYHLKNLLLYECEKHPRDYEWDESCIADRINGIFLQLISCLQYRRCPHYFLPSLDMFKGKSPSALEQAAKQVWRLTREMLTNANAFEKL.

This sequence belongs to the mab-21 family.

This Drosophila pseudoobscura pseudoobscura (Fruit fly) protein is Protein mab-21-like.